The sequence spans 475 residues: Ankyrin repeat, SAM and basic leucine zipper domain-containing protein 1 (475 aa).

Positions 1–25 are disordered; it reads MAASALRGLPVAGGGESSESEDDGW. Phosphoserine is present on residues serine 17, serine 18, and serine 20. ANK repeat units follow at residues 45–74, 78–107, 110–144, 148–177, 181–210, and 214–243; these read EKKE…SVDS, YGWT…NASF, DKQS…DPNV, RLMT…EVNT, NGYT…NKML, and DGKM…PLEG. An SAM domain is found at 272–334; sequence SYTAFGDLEV…KILAALKELQ (63 aa).

In terms of assembly, interacts with DDX4, PIWIL1, RANBP9 and TDRD1. In terms of tissue distribution, expressed exclusively in the testis and ovary and at higher levels in the adult testis compared with the adult ovary.

It is found in the cytoplasm. Plays a central role during spermatogenesis by repressing transposable elements and preventing their mobilization, which is essential for the germline integrity. Acts via the piRNA metabolic process, which mediates the repression of transposable elements during meiosis by forming complexes composed of piRNAs and Piwi proteins and governs the methylation and subsequent repression of transposons. Its association with pi-bodies suggests a participation in the primary piRNAs metabolic process. Required prior to the pachytene stage to facilitate the production of multiple types of piRNAs, including those associated with repeats involved in the regulation of retrotransposons. May act by mediating protein-protein interactions during germ cell maturation. The sequence is that of Ankyrin repeat, SAM and basic leucine zipper domain-containing protein 1 from Homo sapiens (Human).